Here is a 334-residue protein sequence, read N- to C-terminus: Methionine adenosyltransferase 2 subunit beta (334 aa).

NADP(+) contacts are provided by residues 37–40 (TGLL), 60–62 (FRR), 71–72 (NL), C93, R97, Y159, and L185. At T309 the chain carries Phosphothreonine. The segment at 319-334 (LWPFLIDKRWRQTVFH) is required for interaction with MAT2A.

The protein belongs to the dTDP-4-dehydrorhamnose reductase family. MAT2B subfamily. In terms of assembly, heterotrimer; composed of a catalytic MAT2A homodimer that binds one regulatory MAT2B chain. Heterohexamer; composed of a central, catalytic MAT2A homotetramer flanked on either side by a regulatory MAT2B chain. NADP binding increases the affinity for MAT2A.

Its pathway is amino-acid biosynthesis; S-adenosyl-L-methionine biosynthesis; S-adenosyl-L-methionine from L-methionine: step 1/1. In terms of biological role, regulatory subunit of S-adenosylmethionine synthetase 2, an enzyme that catalyzes the formation of S-adenosylmethionine from methionine and ATP. Regulates MAT2A catalytic activity by changing its kinetic properties, increasing its affinity for L-methionine. Can bind NADP (in vitro). This chain is Methionine adenosyltransferase 2 subunit beta (Mat2b), found in Rattus norvegicus (Rat).